A 679-amino-acid chain; its full sequence is Glycine--tRNA ligase beta subunit (679 aa).

Belongs to the class-II aminoacyl-tRNA synthetase family. Tetramer of two alpha and two beta subunits.

It is found in the cytoplasm. It carries out the reaction tRNA(Gly) + glycine + ATP = glycyl-tRNA(Gly) + AMP + diphosphate. The polypeptide is Glycine--tRNA ligase beta subunit (Streptococcus pyogenes serotype M2 (strain MGAS10270)).